The following is a 517-amino-acid chain: Nicotine N-demethylase CYP82E4 (517 aa).

The chain crosses the membrane as a helical span at residues 2-22; the sequence is VFPIEAIVGLVTFTFLFFFLW. Residue Lys-254 forms a Glycyl lysine isopeptide (Lys-Gly) (interchain with G-Cter in ubiquitin) linkage. Residue Cys-457 participates in heme binding.

The protein belongs to the cytochrome P450 family. CYP82E2 subfamily. The cofactor is heme. In terms of tissue distribution, expressed at low levels in green leaves.

It localises to the membrane. It catalyses the reaction (S)-nicotine + reduced [NADPH--hemoprotein reductase] + O2 = (S)-nornicotine + formaldehyde + oxidized [NADPH--hemoprotein reductase] + H2O + H(+). It participates in alkaloid biosynthesis; nicotine biosynthesis. Functionally, involved in the biosynthesis of pyridine alkaloid natural products, leading mainly to the production of anabasine, anatabine, nicotine and nornicotine, effective deterrents against herbivores with antiparasitic and pesticide properties (neurotoxins); nornicotine serves as the precursor in the synthesis of the carcinogen compound N'-nitrosonornicotine (NNN). Catalyzes the demethylation of nicotine to form nornicotine. In Nicotiana tabacum (Common tobacco), this protein is Nicotine N-demethylase CYP82E4.